The chain runs to 535 residues: ATP-dependent RNA helicase DBP3 (535 aa).

Residues 1–21 (MGSSSKSEKRKYDDGEELLER) are compositionally biased toward basic and acidic residues. Residues 1–96 (MGSSSKSEKR…TSYGYVQSSK (96 aa)) are disordered. Residues 35–54 (KKDKKEKKDKKEKKDKKEKK) are compositionally biased toward basic residues. Residues 55-72 (DKKEKNKESKEAEARDDS) are compositionally biased toward basic and acidic residues. Residues 79–88 (SSSSSTESTS) show a composition bias toward low complexity. Residues 128–154 (LSFDQIKLQKDVSSKLTKFPKPTPIQS) carry the Q motif motif. The Helicase ATP-binding domain maps to 157 to 329 (WPFLLDGKDV…NNFMNQPVKV (173 aa)). 170–177 (AETGSGKT) is a binding site for ATP. Residues 276–279 (DEAD) carry the DEAD box motif. The Helicase C-terminal domain maps to 362–508 (NLLQKYQNTG…PVPEALLKYG (147 aa)).

Belongs to the DEAD box helicase family. DDX5/DBP2 subfamily.

It is found in the nucleus. The protein localises to the nucleolus. It catalyses the reaction ATP + H2O = ADP + phosphate + H(+). Its function is as follows. ATP-dependent RNA helicase required for 60S ribosomal subunit synthesis. Involved in efficient pre-rRNA processing, predominantly at site A3, which is necessary for the normal formation of 25S and 5.8S rRNAs. This chain is ATP-dependent RNA helicase DBP3 (DBP3), found in Lodderomyces elongisporus (strain ATCC 11503 / CBS 2605 / JCM 1781 / NBRC 1676 / NRRL YB-4239) (Yeast).